Consider the following 392-residue polypeptide: Formate-dependent phosphoribosylglycinamide formyltransferase (392 aa).

N(1)-(5-phospho-beta-D-ribosyl)glycinamide contacts are provided by residues 20–21 (EL) and Glu-80. Residues Arg-112, Lys-153, 158–163 (SSGKGQ), 193–196 (EGFV), and Glu-201 contribute to the ATP site. Residues 117 to 306 (RLAAEELGLP…EFALHVRAIL (190 aa)) enclose the ATP-grasp domain. Mg(2+) is bound by residues Glu-265 and Glu-277. N(1)-(5-phospho-beta-D-ribosyl)glycinamide-binding positions include Asp-284, Lys-355, and 362 to 363 (RR).

Belongs to the PurK/PurT family. Homodimer.

It carries out the reaction N(1)-(5-phospho-beta-D-ribosyl)glycinamide + formate + ATP = N(2)-formyl-N(1)-(5-phospho-beta-D-ribosyl)glycinamide + ADP + phosphate + H(+). Its pathway is purine metabolism; IMP biosynthesis via de novo pathway; N(2)-formyl-N(1)-(5-phospho-D-ribosyl)glycinamide from N(1)-(5-phospho-D-ribosyl)glycinamide (formate route): step 1/1. Its function is as follows. Involved in the de novo purine biosynthesis. Catalyzes the transfer of formate to 5-phospho-ribosyl-glycinamide (GAR), producing 5-phospho-ribosyl-N-formylglycinamide (FGAR). Formate is provided by PurU via hydrolysis of 10-formyl-tetrahydrofolate. This Aeromonas salmonicida (strain A449) protein is Formate-dependent phosphoribosylglycinamide formyltransferase.